The following is a 456-amino-acid chain: Phytase A (456 aa).

An N-terminal signal peptide occupies residues 1–24; the sequence is MSSMASVLFAALAISGVQVTPSRG. Residues Gln37, Tyr38, Arg68, His69, Arg72, Thr75, and Arg152 each contribute to the 1D-myo-inositol hexakisphosphate site. Intrachain disulfides connect Cys58–Cys396, Cys197–Cys450, Cys246–Cys264, and Cys421–Cys429. The Nucleophile role is filled by His69. A 1D-myo-inositol hexakisphosphate-binding site is contributed by Lys283. Asn317 carries an N-linked (GlcNAc...) asparagine glycan. 1D-myo-inositol hexakisphosphate is bound by residues His343 and Asp344. Asn358 carries N-linked (GlcNAc...) asparagine glycosylation.

It belongs to the histidine acid phosphatase family. As to quaternary structure, monomer.

The protein localises to the secreted. It carries out the reaction 1D-myo-inositol hexakisphosphate + H2O = 1D-myo-inositol 1,2,4,5,6-pentakisphosphate + phosphate. It catalyses the reaction 1D-myo-inositol 1,2,4,5,6-pentakisphosphate + H2O = 1D-myo-inositol 1,2,5,6-tetrakisphosphate + phosphate. The enzyme catalyses 1D-myo-inositol 1,2,5,6-tetrakisphosphate + H2O = 1D-myo-inositol 1,2,6-trisphosphate + phosphate. The catalysed reaction is 1D-myo-inositol 1,2,6-trisphosphate + H2O = 1D-myo-inositol 1,2-bisphosphate + phosphate. It carries out the reaction 1D-myo-inositol 1,2-bisphosphate + H2O = 1D-myo-inositol 2-phosphate + phosphate. Functionally, catalyzes the phosphate monoester hydrolysis of phytic acid (myo-inositol hexakisphosphate), which results in the stepwise formation of myo-inositol pentakis-, tetrakis-, tris-, bis-, and monophosphates, as well as the liberation of inorganic phosphate. Myo-inositol 2-monophosphate is the end product. This is Phytase A from Arthroderma benhamiae (strain ATCC MYA-4681 / CBS 112371) (Trichophyton mentagrophytes).